Reading from the N-terminus, the 147-residue chain is UPF0260 protein Ent638_2368 (147 aa).

This sequence belongs to the UPF0260 family.

This is UPF0260 protein Ent638_2368 from Enterobacter sp. (strain 638).